A 253-amino-acid polypeptide reads, in one-letter code: Glucosamine-6-phosphate deaminase (253 aa).

The Proton acceptor; for enolization step role is filled by D65. N133 functions as the For ring-opening step in the catalytic mechanism. H135 acts as the Proton acceptor; for ring-opening step in catalysis. Residue E140 is the For ring-opening step of the active site.

Belongs to the glucosamine/galactosamine-6-phosphate isomerase family. NagB subfamily.

It catalyses the reaction alpha-D-glucosamine 6-phosphate + H2O = beta-D-fructose 6-phosphate + NH4(+). It participates in amino-sugar metabolism; N-acetylneuraminate degradation; D-fructose 6-phosphate from N-acetylneuraminate: step 5/5. Functionally, catalyzes the reversible isomerization-deamination of glucosamine 6-phosphate (GlcN6P) to form fructose 6-phosphate (Fru6P) and ammonium ion. The polypeptide is Glucosamine-6-phosphate deaminase (Corynebacterium glutamicum (strain ATCC 13032 / DSM 20300 / JCM 1318 / BCRC 11384 / CCUG 27702 / LMG 3730 / NBRC 12168 / NCIMB 10025 / NRRL B-2784 / 534)).